Consider the following 205-residue polypeptide: Endoplasmic reticulum membrane protein complex subunit 10 (205 aa).

Positions 1-17 are cleaved as a signal peptide; sequence MLVRLLRVILLASMVFC. The Lumenal portion of the chain corresponds to 18–172; it reads ADILQLSYSD…VKEVSWFQKN (155 aa). N47 carries N-linked (GlcNAc...) asparagine glycosylation. Residues 173–190 traverse the membrane as a helical segment; the sequence is WKMLLLGLLIYNFVAGSA. Residues 191-205 are Cytoplasmic-facing; it reads KKQQQGGAGADQKTE.

As to quaternary structure, component of the ER membrane protein complex (EMC).

It is found in the endoplasmic reticulum membrane. Part of the endoplasmic reticulum membrane protein complex (EMC) that enables the energy-independent insertion into endoplasmic reticulum membranes of newly synthesized membrane proteins. Preferentially accommodates proteins with transmembrane domains that are weakly hydrophobic or contain destabilizing features such as charged and aromatic residues. Involved in the cotranslational insertion of multi-pass membrane proteins in which stop-transfer membrane-anchor sequences become ER membrane spanning helices. It is also required for the post-translational insertion of tail-anchored/TA proteins in endoplasmic reticulum membranes. By mediating the proper cotranslational insertion of N-terminal transmembrane domains in an N-exo topology, with translocated N-terminus in the lumen of the ER, controls the topology of multi-pass membrane proteins. This is Endoplasmic reticulum membrane protein complex subunit 10 from Saccharomyces cerevisiae (strain ATCC 204508 / S288c) (Baker's yeast).